A 979-amino-acid chain; its full sequence is UPF0182 protein Rv0064 (979 aa).

The next 7 helical transmembrane spans lie at 19–41 (LVTAGMGMLALLLFGPRLVDIYV), 63–85 (LAIVAAVALVVAGIVLAALLLAY), 114–136 (LFGWGIAVTLGVVCGLIASFDWV), 174–196 (WLFVAVVLAFLASLLTHYLFGGL), 208–230 (AARVQLAVFAGAVVLLKAVAYWL), 261–280 (LVLVAIAVLCAVSFFTAIFL), and 285–307 (IPAMAAALLVLSAILVGGLWPLL). Residues 898–948 (GTGRVATARGGDAASAPPPGAGGPAPPQAVPPPRTTQPPAAPPRGPDVPPA) are disordered. The span at 913–946 (APPPGAGGPAPPQAVPPPRTTQPPAAPPRGPDVP) shows a compositional bias: pro residues.

Belongs to the UPF0182 family.

Its subcellular location is the cell membrane. This Mycobacterium tuberculosis (strain ATCC 25618 / H37Rv) protein is UPF0182 protein Rv0064.